Here is a 146-residue protein sequence, read N- to C-terminus: Hemoglobin subunit beta (146 aa).

Residues 2-146 enclose the Globin domain; the sequence is HWSAEEKQLI…VAHALARKYH (145 aa). Heme b-binding residues include His63 and His92.

The protein belongs to the globin family. As to quaternary structure, heterotetramer of two alpha chains and two beta chains. Red blood cells.

Its function is as follows. Involved in oxygen transport from the lung to the various peripheral tissues. The protein is Hemoglobin subunit beta (HBB) of Streptopelia orientalis (Eastern turtle dove).